The primary structure comprises 136 residues: Cancer/testis antigen 62 (136 aa).

Positions 1–22 (MMHTTSYRRLSPPHLTDQPSAY) are disordered.

In terms of tissue distribution, testis specific. Expressed in cancer cell lines.

The sequence is that of Cancer/testis antigen 62 (CT62) from Homo sapiens (Human).